Here is a 239-residue protein sequence, read N- to C-terminus: Protein GrpE (239 aa).

2 disordered regions span residues 1–60 (MIEN…SNND) and 208–239 (SMGP…SEDV). Residues 28–42 (SMQNSTTENDELSSQ) are compositionally biased toward polar residues. Composition is skewed to basic and acidic residues over residues 43–53 (KTEEINTEELK) and 216–225 (SQQEVEKDTV). Residues 226–239 (EGDVDSDANTSEDV) are compositionally biased toward acidic residues.

Belongs to the GrpE family. Homodimer.

Its subcellular location is the cytoplasm. Functionally, participates actively in the response to hyperosmotic and heat shock by preventing the aggregation of stress-denatured proteins, in association with DnaK and GrpE. It is the nucleotide exchange factor for DnaK and may function as a thermosensor. Unfolded proteins bind initially to DnaJ; upon interaction with the DnaJ-bound protein, DnaK hydrolyzes its bound ATP, resulting in the formation of a stable complex. GrpE releases ADP from DnaK; ATP binding to DnaK triggers the release of the substrate protein, thus completing the reaction cycle. Several rounds of ATP-dependent interactions between DnaJ, DnaK and GrpE are required for fully efficient folding. The protein is Protein GrpE of Prochlorococcus marinus (strain MIT 9301).